Consider the following 305-residue polypeptide: UDP-3-O-acyl-N-acetylglucosamine deacetylase (305 aa).

Zn(2+) is bound by residues histidine 79, histidine 238, and aspartate 242. Histidine 265 acts as the Proton donor in catalysis.

The protein belongs to the LpxC family. Zn(2+) serves as cofactor.

It carries out the reaction a UDP-3-O-[(3R)-3-hydroxyacyl]-N-acetyl-alpha-D-glucosamine + H2O = a UDP-3-O-[(3R)-3-hydroxyacyl]-alpha-D-glucosamine + acetate. Its pathway is glycolipid biosynthesis; lipid IV(A) biosynthesis; lipid IV(A) from (3R)-3-hydroxytetradecanoyl-[acyl-carrier-protein] and UDP-N-acetyl-alpha-D-glucosamine: step 2/6. Catalyzes the hydrolysis of UDP-3-O-myristoyl-N-acetylglucosamine to form UDP-3-O-myristoylglucosamine and acetate, the committed step in lipid A biosynthesis. In Shigella dysenteriae serotype 1 (strain Sd197), this protein is UDP-3-O-acyl-N-acetylglucosamine deacetylase.